Reading from the N-terminus, the 174-residue chain is UPF0398 protein LACR_0544 (174 aa).

It belongs to the UPF0398 family.

The chain is UPF0398 protein LACR_0544 from Lactococcus lactis subsp. cremoris (strain SK11).